Here is a 252-residue protein sequence, read N- to C-terminus: Ribosomal RNA small subunit methyltransferase J (252 aa).

Residues 101 to 102 (RD), 117 to 118 (ER), 153 to 154 (SS), and Asp171 contribute to the S-adenosyl-L-methionine site.

Belongs to the methyltransferase superfamily. RsmJ family.

The protein resides in the cytoplasm. The catalysed reaction is guanosine(1516) in 16S rRNA + S-adenosyl-L-methionine = N(2)-methylguanosine(1516) in 16S rRNA + S-adenosyl-L-homocysteine + H(+). Its function is as follows. Specifically methylates the guanosine in position 1516 of 16S rRNA. This chain is Ribosomal RNA small subunit methyltransferase J, found in Pseudoalteromonas translucida (strain TAC 125).